Consider the following 350-residue polypeptide: MKFDVLFGGVSFEHEISIVSAVALKKVLGESIGNFIFLDSSHRFYLIPLDSMKSKLFSSGDYKKCTEIFLQRGAFVKKTFFGFKPIIPHTLINLIHGADGEDGSVSALLDFYHLPFIGPRIESSVMSFNKVFTKIFAAQRGVKVLDYEILTRANPHLKHIAYPIILKPARLGSSIGVSVINEEKELDYGRDLAFEYDDTIIAESFKSGVKEYNLAGCRVKNGSQDEYRFSIIEEPSKKELLDFERKYLDFSRTAQVLQADISSALVAKLQENFMKLYENAFEGALIRCDFFVIDDEVYLNEINPIPGSMANYLFEDFVGVLTELAYNLPKKHSIKVSYKYIEQIHYAKGK.

The ATP-grasp domain maps to 134–337 (KIFAAQRGVK…LPKKHSIKVS (204 aa)). 160 to 212 (IAYPIILKPARLGSSIGVSVINEEKELDYGRDLAFEYDDTIIAESFKSGVKEY) contacts ATP. 3 residues coordinate Mg(2+): D289, E301, and N303.

Belongs to the D-alanine--D-alanine ligase family. The cofactor is Mg(2+). It depends on Mn(2+) as a cofactor.

The protein localises to the cytoplasm. It carries out the reaction 2 D-alanine + ATP = D-alanyl-D-alanine + ADP + phosphate + H(+). The protein operates within cell wall biogenesis; peptidoglycan biosynthesis. Functionally, cell wall formation. This Helicobacter hepaticus (strain ATCC 51449 / 3B1) protein is D-alanine--D-alanine ligase.